A 673-amino-acid chain; its full sequence is DNA ligase (673 aa).

Residues 32-36 (DAEYD), 81-82 (SL), and Glu113 each bind NAD(+). Lys115 functions as the N6-AMP-lysine intermediate in the catalytic mechanism. NAD(+)-binding residues include Arg136, Glu173, Lys290, and Lys314. Residues Cys408, Cys411, Cys426, and Cys432 each contribute to the Zn(2+) site. In terms of domain architecture, BRCT spans 595 to 673 (EIDSPFAGKT…EAEMIRLLGA (79 aa)).

The protein belongs to the NAD-dependent DNA ligase family. LigA subfamily. The cofactor is Mg(2+). It depends on Mn(2+) as a cofactor.

The enzyme catalyses NAD(+) + (deoxyribonucleotide)n-3'-hydroxyl + 5'-phospho-(deoxyribonucleotide)m = (deoxyribonucleotide)n+m + AMP + beta-nicotinamide D-nucleotide.. DNA ligase that catalyzes the formation of phosphodiester linkages between 5'-phosphoryl and 3'-hydroxyl groups in double-stranded DNA using NAD as a coenzyme and as the energy source for the reaction. It is essential for DNA replication and repair of damaged DNA. The polypeptide is DNA ligase (Serratia proteamaculans (strain 568)).